Here is a 241-residue protein sequence, read N- to C-terminus: Uracil-DNA glycosylase (241 aa).

The active-site Proton acceptor is Asp-68.

The protein belongs to the uracil-DNA glycosylase (UDG) superfamily. UNG family.

The protein localises to the cytoplasm. The enzyme catalyses Hydrolyzes single-stranded DNA or mismatched double-stranded DNA and polynucleotides, releasing free uracil.. Functionally, excises uracil residues from the DNA which can arise as a result of misincorporation of dUMP residues by DNA polymerase or due to deamination of cytosine. This chain is Uracil-DNA glycosylase, found in Sinorhizobium medicae (strain WSM419) (Ensifer medicae).